We begin with the raw amino-acid sequence, 86 residues long: MAKEELLEMEGVVNEVLPDTRFRVTLENGVEVQAYASGKMRKHRIRILAGDKVSVELSPYDLTKARISFRHKDERPAGAPSQFRRR.

Positions methionine 1–lysine 72 constitute an S1-like domain.

This sequence belongs to the IF-1 family. In terms of assembly, component of the 30S ribosomal translation pre-initiation complex which assembles on the 30S ribosome in the order IF-2 and IF-3, IF-1 and N-formylmethionyl-tRNA(fMet); mRNA recruitment can occur at any time during PIC assembly.

Its subcellular location is the cytoplasm. Functionally, one of the essential components for the initiation of protein synthesis. Stabilizes the binding of IF-2 and IF-3 on the 30S subunit to which N-formylmethionyl-tRNA(fMet) subsequently binds. Helps modulate mRNA selection, yielding the 30S pre-initiation complex (PIC). Upon addition of the 50S ribosomal subunit IF-1, IF-2 and IF-3 are released leaving the mature 70S translation initiation complex. This Aromatoleum aromaticum (strain DSM 19018 / LMG 30748 / EbN1) (Azoarcus sp. (strain EbN1)) protein is Translation initiation factor IF-1 2.